The following is a 296-amino-acid chain: NAD kinase (296 aa).

The Proton acceptor role is filled by Asp72. Residues 72-73 (DG), 146-147 (ND), Arg157, Lys174, Asp176, 187-192 (TAYALS), and Gln247 each bind NAD(+).

Belongs to the NAD kinase family. It depends on a divalent metal cation as a cofactor.

It is found in the cytoplasm. It carries out the reaction NAD(+) + ATP = ADP + NADP(+) + H(+). In terms of biological role, involved in the regulation of the intracellular balance of NAD and NADP, and is a key enzyme in the biosynthesis of NADP. Catalyzes specifically the phosphorylation on 2'-hydroxyl of the adenosine moiety of NAD to yield NADP. The chain is NAD kinase from Pseudomonas savastanoi pv. phaseolicola (strain 1448A / Race 6) (Pseudomonas syringae pv. phaseolicola (strain 1448A / Race 6)).